We begin with the raw amino-acid sequence, 204 residues long: FMN-dependent NADH:quinone oxidoreductase (204 aa).

Residues Ser10 and 15–17 (SLS) contribute to the FMN site.

This sequence belongs to the azoreductase type 1 family. Homodimer. It depends on FMN as a cofactor.

It catalyses the reaction 2 a quinone + NADH + H(+) = 2 a 1,4-benzosemiquinone + NAD(+). It carries out the reaction N,N-dimethyl-1,4-phenylenediamine + anthranilate + 2 NAD(+) = 2-(4-dimethylaminophenyl)diazenylbenzoate + 2 NADH + 2 H(+). Functionally, quinone reductase that provides resistance to thiol-specific stress caused by electrophilic quinones. Its function is as follows. Also exhibits azoreductase activity. Catalyzes the reductive cleavage of the azo bond in aromatic azo compounds to the corresponding amines. This Rhizobium johnstonii (strain DSM 114642 / LMG 32736 / 3841) (Rhizobium leguminosarum bv. viciae) protein is FMN-dependent NADH:quinone oxidoreductase.